We begin with the raw amino-acid sequence, 471 residues long: Heat shock 70 kDa protein 13 (471 aa).

Positions 1 to 22 (MAREMTILGSAVLTLLLAGYLA) are cleaved as a signal peptide. The span at 315–341 (EQDRKEPHSSDTELPKDKLSSADDHRV) shows a compositional bias: basic and acidic residues. A disordered region spans residues 315-352 (EQDRKEPHSSDTELPKDKLSSADDHRVNSGFGRGLSDK).

The protein belongs to the heat shock protein 70 family. As to quaternary structure, binds UBQLN2. Constitutively expressed in all tissues.

The protein resides in the microsome. The protein localises to the endoplasmic reticulum. Functionally, has peptide-independent ATPase activity. The polypeptide is Heat shock 70 kDa protein 13 (HSPA13) (Homo sapiens (Human)).